Consider the following 153-residue polypeptide: Arachidonate 5-lipoxygenase-activating protein (153 aa).

At Met-1–Asn-8 the chain is on the lumenal side. The chain crosses the membrane as a helical span at residues Val-9–Val-30. Residues Glu-31–Arg-52 lie on the Cytoplasmic side of the membrane. A helical membrane pass occupies residues Val-53–Leu-77. The Lumenal portion of the chain corresponds to Cys-78–Gln-80. Residues Val-81 to Leu-102 traverse the membrane as a helical segment. The Cytoplasmic segment spans residues Gly-103–Gln-107. Residues Ser-108–Gly-115 lie within the membrane without spanning it. Residues Lys-116–Ala-128 traverse the membrane as a helical segment. The Lumenal segment spans residues Gly-129 to Thr-153.

Belongs to the MAPEG family. Homotrimer. Interacts with LTC4S and ALOX5.

The protein localises to the nucleus membrane. It localises to the endoplasmic reticulum membrane. In terms of biological role, required for leukotriene biosynthesis by ALOX5 (5-lipoxygenase). Anchors ALOX5 to the membrane. Binds arachidonic acid, and could play an essential role in the transfer of arachidonic acid to ALOX5. Binds to MK-886, a compound that blocks the biosynthesis of leukotrienes. In Oryctolagus cuniculus (Rabbit), this protein is Arachidonate 5-lipoxygenase-activating protein (ALOX5AP).